The chain runs to 402 residues: FMN-dependent alpha-hydroxy acid dehydrogenase qulF (402 aa).

One can recognise an FMN hydroxy acid dehydrogenase domain in the interval 22–394 (RLPAITTNPT…NRDCMRRISY (373 aa)). Residue Y48 participates in a 2-oxocarboxylate binding. Residues S130 and Q152 each coordinate FMN. Residues Y154 and R189 each contribute to the a 2-oxocarboxylate site. K265 contacts FMN. H289 (proton acceptor) is an active-site residue. Residue R292 participates in a 2-oxocarboxylate binding. FMN-binding positions include 320–324 (DSGVR) and 343–344 (GR).

The protein belongs to the FMN-dependent alpha-hydroxy acid dehydrogenase family. FMN serves as cofactor.

Functionally, FMN-dependent alpha-hydroxy acid dehydrogenase; part of the gene cluster that mediates the biosynthesis of quinolactacin A2 (QUL A2), a fungal alkaloid that features a quinolone-gamma-lactam hybrid, which is a potential pharmacophore for the treatment of cancer and Alzheimer's disease. The quinolone-gamma-lactam hybrid scaffold is synthesized from the combination of L-isoleucine (L-Ile) and the nonproteinogenic amino acid L-kynurenine, followed by quinolone cyclization, oxidative decarboxylation, and lactam formation. Additionally, the N-methyl group is derived from methionine, which might be catalyzed by an S-adenosylmethionine (SAM)-dependent methyltransferase. Bioconversion of L-tryptophan to L-kynurenine could be catalyzed by the indoleamine-2,3-dioxygenase (IDO) qulI to produce an unstable product, N-formyl-L-kynurenine, followed by kynurenine formamidase catalyzed hydrolysis. QulM then acts as a methyltransferase that methylates L-kynurenine at the N-4 position. The FMN-dependent alpha-hydroxy acid dehydrogenase qulF than functions as an oxidative decarboxylase which converts N-methylkynurenine into 2-aminobenzoylacetamide via 2 tandem reactions, including dehydrogenation and decarboxylation. An amidase located outside of the qul gene cluster further produces the unstable beta-keto acid precursor N-methyl-2-aminobenzoylacetate, which could be spontaneously dehydrated to form N-methyl-4-hydroxy-2-quinolone. The NRPS qulB is able to incorporate N-methyl-2-aminobenzoylacetate and efficiently compete with the spontaneous reaction. By further extending the beta-keto acid with L-Ile, qulA performs a Dieckmann condensation to form the gamma-lactam ring and release a 4-ketopyrrolidinone intermediate from the assembly line. This intermediate could plausibly further undergo a spontaneous cyclization to yield the final quinolone-gamma-lactam hybrid structure. This Penicillium citrinum protein is FMN-dependent alpha-hydroxy acid dehydrogenase qulF.